The chain runs to 272 residues: Prohibitin 1 (272 aa).

Positions 177-211 form a coiled coil; it reads KEFTEAVEMKQVAQQEAERARFIVEKAEQQKKAAV.

As to quaternary structure, the mitochondrial prohibitin complex consists of two subunits (PHB1 and PHB2), assembled into a membrane-associated ring-shaped supercomplex of approximately 1 mDa.

It localises to the mitochondrion inner membrane. Its subcellular location is the nucleus. The protein resides in the cytoplasm. It is found in the cell membrane. In terms of biological role, protein with pleiotropic attributes mediated in a cell-compartment- and tissue-specific manner, which include the plasma membrane-associated cell signaling functions, mitochondrial chaperone, and transcriptional co-regulator of transcription factors in the nucleus. Its function is as follows. In the mitochondria, together with PHB2, forms large ring complexes (prohibitin complexes) in the inner mitochondrial membrane (IMM) and functions as a chaperone protein that stabilizes mitochondrial respiratory enzymes and maintains mitochondrial integrity in the IMM, which is required for mitochondrial morphogenesis, neuronal survival, and normal lifespan. In the nucleus, acts as a transcription coregulator, enhances promoter binding by TP53, a transcription factor it activates, but reduces the promoter binding by E2F1, a transcription factor it represses. Functionally, in the plasma membrane, cooperates with CD86 to mediate CD86-signaling in B lymphocytes that regulates the level of IgG1 produced through the activation of distal signaling intermediates. Upon CD40 engagement, required to activate NF-kappa-B signaling pathway via phospholipase C and protein kinase C activation. In Gallus gallus (Chicken), this protein is Prohibitin 1 (PHB1).